The chain runs to 508 residues: Chromosomal replication initiator protein DnaA (508 aa).

Residues 1 to 91 (MADDPGSSFT…TDALSRRLGQ (91 aa)) are domain I, interacts with DnaA modulators. The interval 91 to 167 (QQIQLGVRIA…AIDPAVAAGT (77 aa)) is domain II. Positions 104-152 (DDVEDALIPSAEPFPDTDADLSARRRTDSRASGERGAVTNTQPGWTNYF) are disordered. A compositionally biased stretch (basic and acidic residues) spans 124 to 136 (LSARRRTDSRASG). Residues 141–152 (VTNTQPGWTNYF) show a composition bias toward polar residues. Residues 168–384 (SLNRRYTFDT…GALIRVTAFA (217 aa)) are domain III, AAA+ region. Positions 212, 214, 215, and 216 each coordinate ATP. The tract at residues 385–508 (SLNKTPIDKS…TTRIRQRSKR (124 aa)) is domain IV, binds dsDNA.

This sequence belongs to the DnaA family. As to quaternary structure, oligomerizes as a right-handed, spiral filament on DNA at oriC.

It localises to the cytoplasm. Functionally, plays an essential role in the initiation and regulation of chromosomal replication. ATP-DnaA binds to the origin of replication (oriC) to initiate formation of the DNA replication initiation complex once per cell cycle. Binds the DnaA box (a 9 base pair repeat at the origin) and separates the double-stranded (ds)DNA. Forms a right-handed helical filament on oriC DNA; dsDNA binds to the exterior of the filament while single-stranded (ss)DNA is stabiized in the filament's interior. The ATP-DnaA-oriC complex binds and stabilizes one strand of the AT-rich DNA unwinding element (DUE), permitting loading of DNA polymerase. After initiation quickly degrades to an ADP-DnaA complex that is not apt for DNA replication. Binds acidic phospholipids. The sequence is that of Chromosomal replication initiator protein DnaA from Mycobacterium avium.